Here is a 354-residue protein sequence, read N- to C-terminus: MGCTMSQEERAALERSRMIEKNLKEDGMQAAKDIKLLLLGAGESGKSTIVKQMKIIHESGFTAEDYKQYKPVVYSNTVQSLVAILRAMSNLGVSFGSADREVDAKLVMDVVARMEDTEPFSEELLSSMKRLWGDAGVQDCFSRSNEYQLNDSAKYFLDDLERLGEAIYQPTEQDILRTRVKTTGIVEVHFTFKNLNFKLFDVGGQRSERKKWIHCFEDVTAIIFCVAMSEYDQVLHEDETTNRMHESLKLFDSICNNKWFTDTSIILFLNKKDLFEEKIKKSPLTICFPEYSGRQDYHEASAYIQAQFEAKNKSANKEIYCHMTCATDTTNIQFVFDAVTDVIIANNLRGCGLY.

Gly2 carries the N-myristoyl glycine lipid modification. Cys3 is lipidated: S-palmitoyl cysteine. In terms of domain architecture, G-alpha spans 32 to 354; the sequence is KDIKLLLLGA…ANNLRGCGLY (323 aa). Positions 35 to 48 are G1 motif; that stretch reads KLLLLGAGESGKST. GTP-binding positions include 40–47, 176–182, 201–205, 270–273, and Ala326; these read GAGESGKS, LRTRVKT, DVGGQ, and NKKD. 2 residues coordinate Mg(2+): Ser47 and Thr182. Residues 174 to 182 form a G2 motif region; the sequence is DILRTRVKT. The segment at 197–206 is G3 motif; that stretch reads FKLFDVGGQR. The segment at 266 to 273 is G4 motif; it reads ILFLNKKD. The G5 motif stretch occupies residues 324-329; the sequence is TCATDT.

This sequence belongs to the G-alpha family. G(i/o/t/z) subfamily. G proteins are composed of 3 units; alpha, beta and gamma. The alpha chain contains the guanine nucleotide binding site. Interacts (in GDP-bound form) with gpr-1; gpr-1 forms a complex with gpr-2 and lin-5. Interacts (in GDP-bound form) with gpb-1. Interacts (in GDP-bound form) with gbas-1 (via GBA motif); the interaction leads to activation of goa-1. As to expression, expressed in the ASER neuron and the intestine.

Functionally, guanine nucleotide-binding proteins (G proteins) are involved as modulators or transducers in various transmembrane signaling systems. In the 1-cell embryo, probably together with gpa-16, controls nuclear rotation and spindle elongation during mitosis. During the first embryonic cell divisions, plays a role in gpr-1/2 cortical localization and in the proper orientation of EMS blastomere mitotic spindle. Polarity determinants (par genes) may regulate lin-5/gpr-1/gpr-2/goa-1 locally to create the asymmetric forces that drive spindle movement. Involved in chemosensory responses to attractive and repellent odors detected by AWC and AWB sensory neurons, respectively. In ASER neurons, acts downstream of glr-3 to regulate cold avoidance behavior via calcium signaling, and it may also play a role in sensing cold in the intestine. Negatively regulates axon regeneration after injury downstream of the inhibitory compound arachidonoyl ethanolamide (AEA) by antagonizing the activation of the JNK pathway (mlk-1/mek-1/kgb-1). In neurons, may negatively regulate diacylglycerol (DAG) production mediated by egl-30 signaling cascade and thereby negatively regulates acetylcholine release. Couples to the muscarinic acetylcholine receptor gar-2 to negatively regulate cholinergic receptor activity in the presence of high levels of acetylcholine in ventral cord motor neurons. Plays a role in the navigational capacity of sperm and the targeting of sperm derived from males to the fertilization site in the uterus of hermaphrodites. Involved in egg-laying and in regulating dopamine-mediated locomotion. Most likely couples to the dopamine receptors dop-2 and dop-3 to positively regulate the dopamine-mediated suppression of crh-1/CREB1 transcription factor activation in cholinergic SIA neurons in the presence of food. The chain is Guanine nucleotide-binding protein G(o) subunit alpha from Caenorhabditis elegans.